The chain runs to 238 residues: 3-dehydroquinate dehydratase (238 aa).

Residues E35–R37 and R70 contribute to the 3-dehydroquinate site. The active-site Proton donor/acceptor is H133. The active-site Schiff-base intermediate with substrate is the K160. Residues R202 and Q225 each coordinate 3-dehydroquinate.

The protein belongs to the type-I 3-dehydroquinase family. In terms of assembly, homodimer.

The catalysed reaction is 3-dehydroquinate = 3-dehydroshikimate + H2O. It participates in metabolic intermediate biosynthesis; chorismate biosynthesis; chorismate from D-erythrose 4-phosphate and phosphoenolpyruvate: step 3/7. Its function is as follows. Involved in the third step of the chorismate pathway, which leads to the biosynthesis of aromatic amino acids. Catalyzes the cis-dehydration of 3-dehydroquinate (DHQ) and introduces the first double bond of the aromatic ring to yield 3-dehydroshikimate. The polypeptide is 3-dehydroquinate dehydratase (Staphylococcus aureus (strain USA300)).